We begin with the raw amino-acid sequence, 205 residues long: Small ribosomal subunit protein uS4 (205 aa).

The 64-residue stretch at Ser94 to Val157 folds into the S4 RNA-binding domain.

Belongs to the universal ribosomal protein uS4 family. As to quaternary structure, part of the 30S ribosomal subunit. Contacts protein S5. The interaction surface between S4 and S5 is involved in control of translational fidelity.

In terms of biological role, one of the primary rRNA binding proteins, it binds directly to 16S rRNA where it nucleates assembly of the body of the 30S subunit. Its function is as follows. With S5 and S12 plays an important role in translational accuracy. The chain is Small ribosomal subunit protein uS4 from Rickettsia conorii (strain ATCC VR-613 / Malish 7).